The primary structure comprises 331 residues: MTTPIVFCNPSNIEESLLYINKSLFSKGVIQAEKLRLSHDIRDNCNIVNIIYRLLRATDEERLEKESLLDAIKNNEYEKQRDNNTIKRLKNELELYQNECQLQLNKVRTLERDQAELITQNKGLKDVNAKNELTLKALKNQLSVSLRQHEQQMETLKGNYGLVKARKGRNLNSMLIVKEPIKQNTNAPILPETASFLQQNDENSNFLNSRVNNDEFQLLKGLNNELKKSNGTLLTCLSGTLNSLVEMLSPLYERPNSNPFEVCELNAILLDAKIQNQLLFIRNLLHERKYVSIDELDAILEENEKNKHLINILQKENKRVFEFLTNMHDKF.

Positions 72–166 (IKNNEYEKQR…KGNYGLVKAR (95 aa)) form a coiled coil.

It belongs to the ADIP family.

The protein localises to the cytoplasm. Its function is as follows. Has a role in meiosis. The polypeptide is Meiotically up-regulated gene 172 protein (mug172) (Schizosaccharomyces pombe (strain 972 / ATCC 24843) (Fission yeast)).